A 233-amino-acid chain; its full sequence is Large ribosomal subunit protein uL1 (233 aa).

The protein belongs to the universal ribosomal protein uL1 family. In terms of assembly, part of the 50S ribosomal subunit.

Binds directly to 23S rRNA. The L1 stalk is quite mobile in the ribosome, and is involved in E site tRNA release. In terms of biological role, protein L1 is also a translational repressor protein, it controls the translation of the L11 operon by binding to its mRNA. The sequence is that of Large ribosomal subunit protein uL1 from Paracoccus denitrificans (strain Pd 1222).